The chain runs to 1208 residues: Calmodulin-binding transcription activator 2 (1208 aa).

The segment at residues 30-160 (RCPLLPPERL…YLNVPALEDC (131 aa)) is a DNA-binding region (CG-1). Residues 78-86 (NRKKVKYRK) carry the Nuclear localization signal motif. Disordered regions lie at residues 269–328 (ISHS…SRGG), 366–418 (VGSE…PCPA), and 437–507 (QLGA…ELEP). A compositionally biased stretch (pro residues) spans 275-288 (PEPPPLIAPLPPEL). 2 stretches are compositionally biased toward low complexity: residues 294 to 305 (SPSSSSSSSSSS) and 319 to 328 (TSRGGSSRGG). Composition is skewed to pro residues over residues 371–380 (SAPPAPPSPA) and 464–476 (TVPP…PSSP). Residues 544-622 (DFSPEWSYPE…LSASVLFEYR (79 aa)) form the IPT/TIG domain. ANK repeat units lie at residues 717–750 (RGMS…SLDL), 762–792 (FSCT…ALSI), and 796–826 (LGRL…ELSV). Disordered stretches follow at residues 826–881 (VEHP…ASDI) and 908–936 (NSKE…DSPP). Residues 829 to 853 (PLALSPPSSSPDTGLSSASSPSELS) show a composition bias toward low complexity. 2 consecutive IQ domains span residues 1054–1083 (LYEA…AAAV) and 1107–1136 (MTQA…AAVL). The tract at residues 1144 to 1166 (YRRRPGPPHRPSGPLPARNKGTF) is disordered.

It belongs to the CAMTA family. May interact with calmodulin.

The protein localises to the nucleus. Transcription activator. May act as tumor suppressor. In Mus musculus (Mouse), this protein is Calmodulin-binding transcription activator 2 (Camta2).